The chain runs to 203 residues: Probable chemoreceptor glutamine deamidase CheD (203 aa).

The protein belongs to the CheD family.

It catalyses the reaction L-glutaminyl-[protein] + H2O = L-glutamyl-[protein] + NH4(+). Functionally, probably deamidates glutamine residues to glutamate on methyl-accepting chemotaxis receptors (MCPs), playing an important role in chemotaxis. The polypeptide is Probable chemoreceptor glutamine deamidase CheD (Methylobacillus flagellatus (strain ATCC 51484 / DSM 6875 / VKM B-1610 / KT)).